The following is a 70-amino-acid chain: Protein SlyX homolog (70 aa).

This sequence belongs to the SlyX family.

This chain is Protein SlyX homolog, found in Shewanella sediminis (strain HAW-EB3).